We begin with the raw amino-acid sequence, 162 residues long: Cyclic pyranopterin monophosphate synthase (162 aa).

Substrate-binding positions include Leu-75–His-77 and Met-113–Glu-114. Residue Asp-128 is part of the active site.

Belongs to the MoaC family. Homohexamer; trimer of dimers.

It carries out the reaction (8S)-3',8-cyclo-7,8-dihydroguanosine 5'-triphosphate = cyclic pyranopterin phosphate + diphosphate. Its pathway is cofactor biosynthesis; molybdopterin biosynthesis. Catalyzes the conversion of (8S)-3',8-cyclo-7,8-dihydroguanosine 5'-triphosphate to cyclic pyranopterin monophosphate (cPMP). This chain is Cyclic pyranopterin monophosphate synthase, found in Burkholderia ambifaria (strain ATCC BAA-244 / DSM 16087 / CCUG 44356 / LMG 19182 / AMMD) (Burkholderia cepacia (strain AMMD)).